Reading from the N-terminus, the 528-residue chain is Probable serine/threonine-protein kinase DDB_G0282417 (528 aa).

Positions 49-77 (NNNNNNNNNNNNNNNNNNNNNNNNNNKNN) are enriched in low complexity. Positions 49–84 (NNNNNNNNNNNNNNNNNNNNNNNNNNKNNNDGDDAA) are disordered. The Protein kinase domain maps to 136 to 466 (QQNRVLIGEG…ESLINNHQYS (331 aa)). ATP contacts are provided by residues 142-150 (IGEGHYGKV) and Lys166. Catalysis depends on Asp266, which acts as the Proton acceptor.

This sequence belongs to the protein kinase superfamily. Ser/Thr protein kinase family.

It catalyses the reaction L-seryl-[protein] + ATP = O-phospho-L-seryl-[protein] + ADP + H(+). The catalysed reaction is L-threonyl-[protein] + ATP = O-phospho-L-threonyl-[protein] + ADP + H(+). This chain is Probable serine/threonine-protein kinase DDB_G0282417, found in Dictyostelium discoideum (Social amoeba).